A 218-amino-acid chain; its full sequence is Adenylate kinase (218 aa).

10 to 15 (GAGKGT) serves as a coordination point for ATP. Residues 30–59 (STGDMFRAAMANQTEMGRLAKSFIDKGELV) form an NMP region. AMP contacts are provided by residues T31, R36, 57 to 59 (ELV), 86 to 89 (GYPR), and Q93. Positions 127–165 (GRFICRSCGSTYHKVFNPTKVEGTCDVCGGHEFFQREDD) are LID. R128 is a binding site for ATP. The Zn(2+) site is built by C131 and C134. 137–138 (TY) is a binding site for ATP. The Zn(2+) site is built by C151 and C154. AMP contacts are provided by R162 and R173. Residue Q201 participates in ATP binding.

The protein belongs to the adenylate kinase family. As to quaternary structure, monomer.

The protein localises to the cytoplasm. It carries out the reaction AMP + ATP = 2 ADP. The protein operates within purine metabolism; AMP biosynthesis via salvage pathway; AMP from ADP: step 1/1. Catalyzes the reversible transfer of the terminal phosphate group between ATP and AMP. Plays an important role in cellular energy homeostasis and in adenine nucleotide metabolism. The polypeptide is Adenylate kinase (Streptococcus thermophilus (strain CNRZ 1066)).